A 364-amino-acid polypeptide reads, in one-letter code: GTPase Obg (364 aa).

The region spanning 1-161 (MRFVDEVTIS…KYLRLELKIL (161 aa)) is the Obg domain. Positions 162-334 (ADAGIIGLPN…LVDAIWKLQS (173 aa)) constitute an OBG-type G domain. GTP is bound by residues 168–175 (GLPNAGKS), 193–197 (FTTLN), 217–220 (DIPG), 287–290 (NKID), and 315–317 (SAE). The Mg(2+) site is built by serine 175 and threonine 195.

Belongs to the TRAFAC class OBG-HflX-like GTPase superfamily. OBG GTPase family. In terms of assembly, monomer. Mg(2+) serves as cofactor.

It is found in the cytoplasm. An essential GTPase which binds GTP, GDP and possibly (p)ppGpp with moderate affinity, with high nucleotide exchange rates and a fairly low GTP hydrolysis rate. Plays a role in control of the cell cycle, stress response, ribosome biogenesis and in those bacteria that undergo differentiation, in morphogenesis control. The chain is GTPase Obg from Lawsonia intracellularis (strain PHE/MN1-00).